The chain runs to 1081 residues: DNA-directed RNA polymerase subunit beta (1081 aa).

It belongs to the RNA polymerase beta chain family. In plastids the minimal PEP RNA polymerase catalytic core is composed of four subunits: alpha, beta, beta', and beta''. When a (nuclear-encoded) sigma factor is associated with the core the holoenzyme is formed, which can initiate transcription.

It localises to the plastid. Its subcellular location is the chloroplast. It catalyses the reaction RNA(n) + a ribonucleoside 5'-triphosphate = RNA(n+1) + diphosphate. Its function is as follows. DNA-dependent RNA polymerase catalyzes the transcription of DNA into RNA using the four ribonucleoside triphosphates as substrates. This Cyanidium caldarium (Red alga) protein is DNA-directed RNA polymerase subunit beta.